The following is a 457-amino-acid chain: Multidrug resistance protein MdtK (457 aa).

12 consecutive transmembrane segments (helical) span residues 11–31 (LSAL…MGVV), 53–73 (IWLP…PVVA), 93–113 (FLAA…EYAI), 127–147 (AIGY…YQVL), 159–179 (PGMM…YIFI), 190–210 (GVGC…LMML), 249–269 (LLFE…LGVV), 276–296 (IALN…VATT), 313–333 (IAAH…AIFT), 357–377 (LMLL…GTGV), 387–407 (IFYI…YLLA), and 417–437 (GPAG…VMMV).

It belongs to the multi antimicrobial extrusion (MATE) (TC 2.A.66.1) family. MdtK subfamily.

It is found in the cell inner membrane. In terms of biological role, multidrug efflux pump that functions probably as a Na(+)/drug antiporter. This chain is Multidrug resistance protein MdtK, found in Pectobacterium atrosepticum (strain SCRI 1043 / ATCC BAA-672) (Erwinia carotovora subsp. atroseptica).